A 424-amino-acid chain; its full sequence is UPF0229 protein PputGB1_0427 (424 aa).

The segment at 81–107 (EFTAGEHIPRPQGGGGGGGGRGKAGNS) is disordered. Residues 92–107 (QGGGGGGGGRGKAGNS) are compositionally biased toward gly residues.

This sequence belongs to the UPF0229 family.

The protein is UPF0229 protein PputGB1_0427 of Pseudomonas putida (strain GB-1).